A 1806-amino-acid polypeptide reads, in one-letter code: SH3 and multiple ankyrin repeat domains protein 3 (1806 aa).

The tract at residues Met-76–Gln-150 is intramolecular interaction with the ANK repeats. At Tyr-197 the chain carries Phosphotyrosine. ANK repeat units follow at residues Ser-223–Phe-253, Asp-257–Tyr-286, Arg-290–Ile-320, Asn-324–Ala-353, Ser-357–Val-386, and Asn-390–Pro-420. Positions Ala-407 to Ser-416 are enriched in basic and acidic residues. Residues Ala-407 to Ser-467 form a disordered region. Positions Leu-439–Ala-461 are enriched in pro residues. Residues Ser-448, Ser-450, Ser-463, Ser-470, and Ser-558 each carry the phosphoserine modification. The SH3 domain occupies Val-546–Met-605. The residue at position 631 (Tyr-631) is a Phosphotyrosine. The PDZ domain maps to Val-646–Thr-740. Disordered regions lie at residues Lys-665–Asp-689 and Pro-760–Pro-853. Residues Pro-753–Pro-760 form a required for interaction with ABI1 region. At Ser-770 the chain carries Phosphoserine. Residues Ala-813–Pro-845 are compositionally biased toward pro residues. A phosphoserine mark is found at Ser-857, Ser-866, and Ser-877. The interval Arg-871–Lys-1021 is disordered. The span at Asp-906–Pro-915 shows a compositional bias: pro residues. Phosphoserine is present on residues Ser-966 and Ser-973. Position 988 is a phosphothreonine (Thr-988). Residues Pro-993 to Ser-1013 are compositionally biased toward gly residues. Tyr-1006 carries the post-translational modification Phosphotyrosine. Asymmetric dimethylarginine is present on Arg-1041. Low complexity predominate over residues Pro-1115–Pro-1124. Disordered regions lie at residues Pro-1115–Leu-1460, Ala-1475–Ala-1525, and Ser-1546–Arg-1584. The span at Thr-1173–Ala-1193 shows a compositional bias: basic and acidic residues. Residue Thr-1204 is modified to Phosphothreonine. Phosphoserine occurs at positions 1208, 1233, 1237, and 1240. Pro residues predominate over residues Glu-1251–Lys-1261. Position 1309 is a phosphothreonine (Thr-1309). Ser-1328 is subject to Phosphoserine. Residues Leu-1360 to Glu-1370 are compositionally biased toward basic and acidic residues. Composition is skewed to low complexity over residues Glu-1371 to Val-1392 and His-1444 to Leu-1460. The SH3-binding signature appears at Pro-1485–Pro-1491. Phosphoserine is present on Ser-1495. Residues Ser-1495–Arg-1505 are compositionally biased toward polar residues. Positions Ile-1569 to Glu-1589 form a coiled coil. 4 positions are modified to phosphoserine: Ser-1585, Ser-1596, Ser-1604, and Ser-1614. Low complexity predominate over residues Pro-1627–Ser-1637. The tract at residues Pro-1627–Gly-1664 is disordered. Over residues Val-1638–Ala-1657 the composition is skewed to pro residues. Residues Ser-1709, Ser-1711, and Ser-1713 each carry the phosphoserine modification. The SAM domain occupies Trp-1743–Ser-1806.

As to quaternary structure, may homomultimerize via its SAM domain. Interacts with BAIAP2, DBNL and SLC17A7/VGLUT1. Interacts with DLGAP1/GKAP, GRM1/MGLUR1, GRM5/MGLUR5 and LZTS3 C-termini via its PDZ domain. Interacts with ABI1, HOMER1, HOMER2, HOMER3 and CTTN/cortactin SH3 domain. Is part of a complex with DLG4/PSD-95 and DLGAP1/GKAP. Interacts (via PDZ domain) with the GRIA1 subunit of the AMPA receptor (via PDZ-binding motif). Interacts with WASF1 and CYFIP2; the interactions mediate the association of SHANK3 with the WAVE1 complex. Interacts with ARPC2; the interaction probably mediates the association of SHANK3 with the Arp2/3 complex. Interacts (via ANK repeats) with SHARPIN and SPTAN1. Interacts (via PDZ domain) with ARHGAP44 (probably via PDZ-binding motif); the interaction takes place in dendritic spines and promotes GRIA1 exocytosis. Interacts with CAMK2A. Interacts with DIP2A. Interacts with ADGRL3. In terms of tissue distribution, expressed in the cerebral cortex and the cerebellum.

It localises to the cytoplasm. Its subcellular location is the postsynaptic density. It is found in the cell projection. The protein resides in the dendritic spine. Major scaffold postsynaptic density protein which interacts with multiple proteins and complexes to orchestrate the dendritic spine and synapse formation, maturation and maintenance. Interconnects receptors of the postsynaptic membrane including NMDA-type and metabotropic glutamate receptors via complexes with GKAP/PSD-95 and HOMER, respectively, and the actin-based cytoskeleton. Plays a role in the structural and functional organization of the dendritic spine and synaptic junction through the interaction with Arp2/3 and WAVE1 complex as well as the promotion of the F-actin clusters. By way of this control of actin dynamics, participates in the regulation of developing neurons growth cone motility and the NMDA receptor-signaling. Also modulates GRIA1 exocytosis and GRM5/MGLUR5 expression and signaling to control the AMPA and metabotropic glutamate receptor-mediated synaptic transmission and plasticity. May be required at an early stage of synapse formation and be inhibited by IGF1 to promote synapse maturation. The polypeptide is SH3 and multiple ankyrin repeat domains protein 3 (SHANK3) (Homo sapiens (Human)).